The chain runs to 676 residues: Rho guanine nucleotide exchange factor 37 (676 aa).

Residues 1–26 are disordered; it reads MADFETDEASSKSESPEQEGQGSEDK. The DH domain maps to 30–213; it reads HQRLAIRELI…QDVNSNINEY (184 aa). The BAR domain occupies 254-455; it reads LKQEAGLVPR…LPHRHVSEPD (202 aa). SH3 domains follow at residues 506–569 and 603–666; these read GPGK…LYHP and PTMS…RTPS. Disordered regions lie at residues 568–601 and 657–676; these read HPINPSEKEPRRQTGMPEDYWLPTPEPTQPSVPT and PSNFLARTPSPTPRGWNLPS.

May act as a guanine nucleotide exchange factor (GEF). The polypeptide is Rho guanine nucleotide exchange factor 37 (Arhgef37) (Rattus norvegicus (Rat)).